Consider the following 295-residue polypeptide: MSVYRDNMYMKYDRNFENRVARRNGQARNASLAKTLHDSGIAERARSPSGSAIPHAYRVMNGSGANDTSLPLTSNPAYVALTSRISSSKSENNQQLAANETAGAPEGTEETVDISNSISDDHANAKNLPAASVKALVGAGVLSDELSVIAYDMSFEDELIQDKQLIDHSVFDQLLEMDDDDEHEFSKSIVWNYFEQAETTIADLQKALEAKDLKKLSSLGHFLKGSSAVLGLTKMRKVCERIQNYGSLRSRDGVMKLPSEEIALDLISKSLSVVNDFYKDARAYLLDFYEKNSST.

Residues 89–110 are disordered; the sequence is KSENNQQLAANETAGAPEGTEE. Residues 97–106 show a composition bias toward low complexity; the sequence is AANETAGAPE. An HPt domain is found at 182 to 284; the sequence is EHEFSKSIVW…NDFYKDARAY (103 aa). Position 221 is a phosphohistidine (His221).

Functionally, binds to the msc4 response regulator which is part of a multistep phosphorelay system that transmits oxidative stress signals to the spc1 MAPK cascade. The polypeptide is Multistep phosphorelay regulator 1 (mpr1) (Schizosaccharomyces pombe (strain 972 / ATCC 24843) (Fission yeast)).